The following is a 263-amino-acid chain: Hydroxyethylthiazole kinase (263 aa).

Residue Met-41 participates in substrate binding. Residues Arg-117 and Ser-163 each coordinate ATP. Residue Ala-190 participates in substrate binding.

The protein belongs to the Thz kinase family. Mg(2+) serves as cofactor.

The enzyme catalyses 5-(2-hydroxyethyl)-4-methylthiazole + ATP = 4-methyl-5-(2-phosphooxyethyl)-thiazole + ADP + H(+). The protein operates within cofactor biosynthesis; thiamine diphosphate biosynthesis; 4-methyl-5-(2-phosphoethyl)-thiazole from 5-(2-hydroxyethyl)-4-methylthiazole: step 1/1. Catalyzes the phosphorylation of the hydroxyl group of 4-methyl-5-beta-hydroxyethylthiazole (THZ). The sequence is that of Hydroxyethylthiazole kinase from Haemophilus influenzae (strain PittEE).